Consider the following 240-residue polypeptide: Demethylmenaquinone methyltransferase (240 aa).

Residues T62, D80, 102-103 (DA), and S119 contribute to the S-adenosyl-L-methionine site.

Belongs to the class I-like SAM-binding methyltransferase superfamily. MenG/UbiE family.

It carries out the reaction a 2-demethylmenaquinol + S-adenosyl-L-methionine = a menaquinol + S-adenosyl-L-homocysteine + H(+). The protein operates within quinol/quinone metabolism; menaquinone biosynthesis; menaquinol from 1,4-dihydroxy-2-naphthoate: step 2/2. Methyltransferase required for the conversion of demethylmenaquinol (DMKH2) to menaquinol (MKH2). This Beutenbergia cavernae (strain ATCC BAA-8 / DSM 12333 / CCUG 43141 / JCM 11478 / NBRC 16432 / NCIMB 13614 / HKI 0122) protein is Demethylmenaquinone methyltransferase.